Here is a 1239-residue protein sequence, read N- to C-terminus: Potassium channel subfamily T member 1 (1239 aa).

The tract at residues 1–45 is disordered; that stretch reads MARAKLPRSPSEGKAGPGDTPAGSAAPEEPHGLSPLLPTRGGGSV. The Cytoplasmic segment spans residues 1–93; sequence MARAKLPRSP…LFFIKNQRSS (93 aa). A helical transmembrane segment spans residues 94–126; sequence LRIRLFNFSLKLLTCLLYIVRVLLDNPDQGIGC. Over 127 to 153 the chain is Extracellular; that stretch reads WGCTKYNYTFNGSSSEFHWAPILWVER. 2 N-linked (GlcNAc...) asparagine glycosylation sites follow: Asn-133 and Asn-137. A helical membrane pass occupies residues 154–178; the sequence is KMALWVIQVIVATISFLETMLLIYL. Residues 179–192 lie on the Cytoplasmic side of the membrane; sequence SYKGNIWEQIFHVS. Residues 193–208 form a helical membrane-spanning segment; sequence FVLEMINTLPFIITVF. Topologically, residues 209-215 are extracellular; sequence WPPLRNL. A helical membrane pass occupies residues 216–233; sequence FIPVFLNCWLAKHALENM. Over 234–246 the chain is Cytoplasmic; sequence INDFHRAILRTQS. A helical transmembrane segment spans residues 247 to 274; that stretch reads AMFNQVLILFCTLLCLVFTGTCGIQHLE. Topologically, residues 275-281 are extracellular; it reads RAGGNLN. The pore-forming intramembrane region spans 282–302; the sequence is LLTSFYFCIVTFSTVGFGDVT. Val-296 and Gly-297 together coordinate K(+). Over 303–304 the chain is Extracellular; sequence PK. A helical transmembrane segment spans residues 305–338; that stretch reads IWPSQLLVVILICVTLVVLPLQFEELVYLWMERQ. The Cytoplasmic segment spans residues 339–1239; that stretch reads KSGGNYSRHR…NPETRDETQL (901 aa). The 137-residue stretch at 352–488 folds into the RCK N-terminal 1 domain; it reads EKHVVLCVSS…FHVKFADHVV (137 aa). Na(+) contacts are provided by Leu-513, His-516, Ser-538, and Asn-540. The segment at 658–689 is disordered; it reads QNTDCRPSQGGSGGGGGKLTLPTENGSGSRRP. 2 residues coordinate Zn(2+): Cys-758 and Cys-759. K(+)-binding residues include Arg-761 and Lys-764. The Na(+) site is built by Arg-761 and Lys-764. Positions 766 and 768 each coordinate Zn(2+). 4 residues coordinate K(+): Asn-769, Tyr-771, Tyr-777, and Gly-778. Tyr-771 is a binding site for Na(+). Residue Phe-779 coordinates Na(+). Residues 781-921 form the RCK N-terminal 2 domain; that stretch reads NKLIIVSAET…QFRAKDSYSL (141 aa). K(+) is bound by residues Ser-787, Leu-818, Asp-820, Gly-842, and Asp-865. Disordered regions lie at residues 1053-1081 and 1212-1239; these read REAK…ADPV and TSSS…ETQL. Residues 1213–1230 show a composition bias toward low complexity; it reads SSSQSRKSSCSNKLSSCN.

The protein belongs to the potassium channel family. Calcium-activated (TC 1.A.1.3) subfamily. KCa4.1/KCNT1 sub-subfamily. In terms of assembly, homotetramer; which constitutes the Na(+)-activated K(+) channel. Interacts with KCNT2; these heterodimer channels differ from the homomers in their unitary conductance, kinetic behavior, subcellular localization, and response to activation of protein kinase C. Interacts (via C-terminus) with FMR1; this interaction alters gating properties of KCNT1. Interacts with CRBN via its cytoplasmic C-terminus. Does not interact with KCNT2. In terms of processing, phosphorylated by protein kinase C. Phosphorylation of the C-terminal domain increases channel activity. In terms of tissue distribution, detected in brain and brainstem, in vestibular and oculomotor nuclei, the medial nucleus of the trapezoid in the auditory system, in olfactory bulb, red nucleus, and deep cerebellar nuclei. Detected in thalamus, substantia nigra, and amygdala (at protein level). Highly expressed in the brain and kidney.

It is found in the cell membrane. It catalyses the reaction K(+)(in) = K(+)(out). With respect to regulation, activated by high intracellular Na(+) level. In addition to activation by Na(+), is cooperatively activated by intracellular Cl(-) levels. Activated upon stimulation of G-protein coupled receptors, such as CHRM1 and GRIA1. Functionally, sodium-activated K(+) channel. Acts as an important mediator of neuronal membrane excitability. Contributes to the delayed outward currents. Regulates neuronal bursting in sensory neurons. Contributes to synaptic development and plasticity. The sequence is that of Potassium channel subfamily T member 1 (Kcnt1) from Rattus norvegicus (Rat).